Consider the following 615-residue polypeptide: DNA mismatch repair protein MutL (615 aa).

Positions 363–397 are disordered; it reads FAEPAAREPVAPRYTPAPASGSRPAAPWPNAQPGY. Low complexity predominate over residues 364–391; it reads AEPAAREPVAPRYTPAPASGSRPAAPWP.

This sequence belongs to the DNA mismatch repair MutL/HexB family.

In terms of biological role, this protein is involved in the repair of mismatches in DNA. It is required for dam-dependent methyl-directed DNA mismatch repair. May act as a 'molecular matchmaker', a protein that promotes the formation of a stable complex between two or more DNA-binding proteins in an ATP-dependent manner without itself being part of a final effector complex. The sequence is that of DNA mismatch repair protein MutL from Escherichia coli (strain K12 / MC4100 / BW2952).